The chain runs to 392 residues: 5-azacytidine-induced protein 2 (392 aa).

The tract at residues 1–197 is homodimerization; that stretch reads MDALVEDDIC…IELQKAKQTD (197 aa). Coiled-coil stretches lie at residues 40 to 76, 102 to 135, and 166 to 196; these read ALVTAYEDIKKRLKDSEKENSLLKKRIRFLEEKLIAR, DRDNLKSKLDKMNKDNSESLKVLNEQLQSKEVEL, and DLKIHGLEQELELMRKECSDLKIELQKAKQT. Residues 216–257 are interaction with TBK1 and IKBKE; sequence SDNMQHAYWELKREMSNLHLVTQVQAELLRKLKTSTAIKKAC. A phosphoserine mark is found at serine 318 and serine 353. Positions 345-365 are disordered; the sequence is EDNSWVFPSPPKSSETAFGET.

Homodimer. Interacts with IKBKE, TBK1 and TICAM1. Interacts with TAX1BP1. Interacts with CALCOCO2. Post-translationally, ubiquitinated via 'Lys-48'-linked polyubiquitination by TRIM38, leading to its degradation.

It localises to the cytoplasm. Its function is as follows. Adapter protein which binds TBK1 and IKBKE playing a role in antiviral innate immunity. Activates serine/threonine-protein kinase TBK1 and facilitates its oligomerization. Enhances the phosphorylation of NF-kappa-B p65 subunit RELA by TBK1. Promotes TBK1-induced as well as TNF-alpha or PMA-induced activation of NF-kappa-B. Participates in IFNB promoter activation via TICAM1. The polypeptide is 5-azacytidine-induced protein 2 (AZI2) (Pongo abelii (Sumatran orangutan)).